The primary structure comprises 192 residues: UPF0301 protein Bamb_0737 (192 aa).

It belongs to the UPF0301 (AlgH) family.

In Burkholderia ambifaria (strain ATCC BAA-244 / DSM 16087 / CCUG 44356 / LMG 19182 / AMMD) (Burkholderia cepacia (strain AMMD)), this protein is UPF0301 protein Bamb_0737.